The primary structure comprises 1037 residues: Tyrosine-protein kinase-like otk (1037 aa).

The N-terminal stretch at 1 to 22 (MAALRISVWILVQALMMALVSS) is a signal peptide. Asn23 and Asn39 each carry an N-linked (GlcNAc...) asparagine glycan. The Extracellular portion of the chain corresponds to 23–582 (NSSHFLQLPQ…GGDGFLVTRA (560 aa)). 5 Ig-like C2-type domains span residues 25-115 (SHFL…AKLS), 114-200 (LSVI…RVMS), 252-366 (PEDL…APIN), 369-464 (PGTL…VAIN), and 469-559 (PKFS…VQLV). 4 disulfides stabilise this stretch: Cys46/Cys96, Cys138/Cys189, Cys277/Cys355, and Cys400/Cys448. Asn337, Asn418, Asn430, Asn445, Asn458, Asn513, and Asn525 each carry an N-linked (GlcNAc...) asparagine glycan. Cys491 and Cys543 are oxidised to a cystine. A helical transmembrane segment spans residues 583–603 (VLITMTVALAYIVLVVGLMLW). Residues 604 to 1037 (CRYRRQARKA…LSKAMQSLEK (434 aa)) are Cytoplasmic-facing. Disordered stretches follow at residues 618–681 (LSTK…KKSA) and 719–764 (ATGS…KTSM). Over residues 653–675 (QSRSKSNGDAQKSDDTACSQQSR) the composition is skewed to polar residues. Ser680 carries the post-translational modification Phosphoserine. One can recognise a Protein kinase; inactive domain in the interval 694–1035 (LTELIQIGRG…AALSKAMQSL (342 aa)). Positions 724 to 735 (SDKDADTEKQHS) are enriched in basic and acidic residues.

The protein belongs to the protein kinase superfamily. Tyr protein kinase family. Insulin receptor subfamily. As to quaternary structure, interacts with plexA; component of a receptor complex that mediates the repulsive signaling in response to Semaphorin ligands.

It localises to the cell membrane. In terms of biological role, acts as a calcium-dependent, homophilic cell adhesion molecule that regulates neural recognition during the development of the nervous system. Component of the repulsive Plexin signaling response to regulate motor axon guidance at the embryonic stage. Also component of a receptor complex that is required in the adult visual system to innervate the lamina layer; specific targeting of R1-R6 axons. In Drosophila ananassae (Fruit fly), this protein is Tyrosine-protein kinase-like otk.